The sequence spans 293 residues: 4-hydroxy-tetrahydrodipicolinate synthase (293 aa).

Residue Thr46 coordinates pyruvate. Residue Tyr133 is the Proton donor/acceptor of the active site. Residue Lys161 is the Schiff-base intermediate with substrate of the active site. Pyruvate is bound at residue Val202.

It belongs to the DapA family. In terms of assembly, homotetramer; dimer of dimers.

Its subcellular location is the cytoplasm. The catalysed reaction is L-aspartate 4-semialdehyde + pyruvate = (2S,4S)-4-hydroxy-2,3,4,5-tetrahydrodipicolinate + H2O + H(+). It functions in the pathway amino-acid biosynthesis; L-lysine biosynthesis via DAP pathway; (S)-tetrahydrodipicolinate from L-aspartate: step 3/4. Functionally, catalyzes the condensation of (S)-aspartate-beta-semialdehyde [(S)-ASA] and pyruvate to 4-hydroxy-tetrahydrodipicolinate (HTPA). This Wolbachia pipientis wMel protein is 4-hydroxy-tetrahydrodipicolinate synthase.